We begin with the raw amino-acid sequence, 144 residues long: MNRTILVPIDISDSELTQRVISHVEAEAKIDDAEVHFLTVIPSLPYYASLGLAYSAELPAMDDLKAEAKSQLEEIIKKFKLPTDRVHVHVEEGSPKDRILELAKKIPAHMIIIASHRPDITTYLLGSNAAAVVRHAECSVLVVR.

It belongs to the universal stress protein A family. In terms of assembly, homodimer.

This is Universal stress protein F (uspF) from Escherichia coli O157:H7.